The chain runs to 365 residues: Peptide chain release factor 2 (365 aa).

Residue Q252 is modified to N5-methylglutamine.

It belongs to the prokaryotic/mitochondrial release factor family. Methylated by PrmC. Methylation increases the termination efficiency of RF2.

The protein resides in the cytoplasm. Its function is as follows. Peptide chain release factor 2 directs the termination of translation in response to the peptide chain termination codons UGA and UAA. This Salmonella typhimurium (strain LT2 / SGSC1412 / ATCC 700720) protein is Peptide chain release factor 2 (prfB).